The chain runs to 375 residues: Dual-specificity RNA methyltransferase RlmN (375 aa).

Glutamate 94 acts as the Proton acceptor in catalysis. One can recognise a Radical SAM core domain in the interval 100 to 339; it reads EDDRATLCVS…VTVRKTRGDD (240 aa). Cysteine 107 and cysteine 344 are oxidised to a cystine. The [4Fe-4S] cluster site is built by cysteine 114, cysteine 118, and cysteine 121. S-adenosyl-L-methionine-binding positions include 168-169, serine 200, 222-224, and asparagine 301; these read GE and SLH. Cysteine 344 serves as the catalytic S-methylcysteine intermediate.

Belongs to the radical SAM superfamily. RlmN family. [4Fe-4S] cluster is required as a cofactor.

It is found in the cytoplasm. It catalyses the reaction adenosine(2503) in 23S rRNA + 2 reduced [2Fe-2S]-[ferredoxin] + 2 S-adenosyl-L-methionine = 2-methyladenosine(2503) in 23S rRNA + 5'-deoxyadenosine + L-methionine + 2 oxidized [2Fe-2S]-[ferredoxin] + S-adenosyl-L-homocysteine. The enzyme catalyses adenosine(37) in tRNA + 2 reduced [2Fe-2S]-[ferredoxin] + 2 S-adenosyl-L-methionine = 2-methyladenosine(37) in tRNA + 5'-deoxyadenosine + L-methionine + 2 oxidized [2Fe-2S]-[ferredoxin] + S-adenosyl-L-homocysteine. In terms of biological role, specifically methylates position 2 of adenine 2503 in 23S rRNA and position 2 of adenine 37 in tRNAs. m2A2503 modification seems to play a crucial role in the proofreading step occurring at the peptidyl transferase center and thus would serve to optimize ribosomal fidelity. This chain is Dual-specificity RNA methyltransferase RlmN, found in Vibrio campbellii (strain ATCC BAA-1116).